Reading from the N-terminus, the 255-residue chain is Hydroxyacylglutathione hydrolase (255 aa).

Residues His-56, His-58, Asp-60, His-61, His-114, Asp-133, and His-171 each coordinate Zn(2+).

The protein belongs to the metallo-beta-lactamase superfamily. Glyoxalase II family. Monomer. Requires Zn(2+) as cofactor.

The enzyme catalyses an S-(2-hydroxyacyl)glutathione + H2O = a 2-hydroxy carboxylate + glutathione + H(+). It participates in secondary metabolite metabolism; methylglyoxal degradation; (R)-lactate from methylglyoxal: step 2/2. Thiolesterase that catalyzes the hydrolysis of S-D-lactoyl-glutathione to form glutathione and D-lactic acid. The chain is Hydroxyacylglutathione hydrolase from Nitrobacter hamburgensis (strain DSM 10229 / NCIMB 13809 / X14).